Reading from the N-terminus, the 401-residue chain is Multidrug resistance protein MdtH (401 aa).

The next 11 membrane-spanning stretches (helical) occupy residues Tyr13–Ile33, Ser34–Leu54, Ile88–Leu108, Ile139–Leu159, Phe164–Trp184, Phe211–Met231, Tyr248–Met268, Glu275–Val295, Leu298–Ala318, Leu341–Gly361, and Phe366–Tyr386.

It belongs to the major facilitator superfamily. DHA1 family. MdtH (TC 2.A.1.2.21) subfamily.

The protein localises to the cell inner membrane. The sequence is that of Multidrug resistance protein MdtH from Blochmanniella floridana.